The chain runs to 123 residues: Loki profilin-3 (123 aa).

Belongs to the Asgard profilin family.

The protein localises to the cytoplasm. The protein resides in the cytoskeleton. Functionally, binds to actin and affects the structure of the cytoskeleton. At high concentrations inhibits spontaneous rabbit actin nucleation. This strongly suggests this archaea has a profilin-regulated actin system, and actin-type genes can be identified in this organism. This chain is Loki profilin-3, found in Lokiarchaeum sp. (strain GC14_75).